Here is a 367-residue protein sequence, read N- to C-terminus: S-adenosylmethionine:tRNA ribosyltransferase-isomerase (367 aa).

The protein belongs to the QueA family. As to quaternary structure, monomer.

It is found in the cytoplasm. It catalyses the reaction 7-aminomethyl-7-carbaguanosine(34) in tRNA + S-adenosyl-L-methionine = epoxyqueuosine(34) in tRNA + adenine + L-methionine + 2 H(+). It functions in the pathway tRNA modification; tRNA-queuosine biosynthesis. Functionally, transfers and isomerizes the ribose moiety from AdoMet to the 7-aminomethyl group of 7-deazaguanine (preQ1-tRNA) to give epoxyqueuosine (oQ-tRNA). This is S-adenosylmethionine:tRNA ribosyltransferase-isomerase from Beijerinckia indica subsp. indica (strain ATCC 9039 / DSM 1715 / NCIMB 8712).